The following is a 223-amino-acid chain: Cytolethal distending toxin subunit A (223 aa).

The N-terminal stretch at 1 to 15 is a signal peptide; that stretch reads MKKFLPSLLLMGSVA. Cys-16 carries N-palmitoyl cysteine lipidation. Cys-16 is lipidated: S-diacylglycerol cysteine. The segment at 20 to 48 is disordered; sequence QRMNDYSQPESQSDLAPKSSTIQPQPQPL. Residues 91-102 are mediates binding to target cells; the sequence is WALAKRNWLWAY. The 90-residue stretch at 123–212 folds into the Ricin B-type lectin domain; it reads HREYFRFVNQ…EPSRDQTWYL (90 aa).

Heterotrimer of 3 subunits, CdtA, CdtB and CdtC.

It localises to the cell outer membrane. CDTs are cytotoxins which induce host cell distension, growth arrest in G2/M phase, nucleus swelling, and chromatin fragmentation in HeLa cells. CdtA, along with CdtC, probably forms a heterodimeric subunit required for the delivery of CdtB. The polypeptide is Cytolethal distending toxin subunit A (cdtA) (Haemophilus ducreyi (strain 35000HP / ATCC 700724)).